The sequence spans 245 residues: D-aminoacyl-tRNA deacylase (245 aa).

It belongs to the DtdA deacylase family. As to quaternary structure, monomer. Requires Zn(2+) as cofactor.

It carries out the reaction a D-aminoacyl-tRNA + H2O = a tRNA + a D-alpha-amino acid + H(+). The enzyme catalyses glycyl-tRNA(Ala) + H2O = tRNA(Ala) + glycine + H(+). D-aminoacyl-tRNA deacylase with broad substrate specificity. By recycling D-aminoacyl-tRNA to D-amino acids and free tRNA molecules, this enzyme counteracts the toxicity associated with the formation of D-aminoacyl-tRNA entities in vivo. This is D-aminoacyl-tRNA deacylase from Ignicoccus hospitalis (strain KIN4/I / DSM 18386 / JCM 14125).